The chain runs to 119 residues: Anamorsin homolog (119 aa).

Positions 1–15 (MSSSATSTQAFSLKT) are enriched in polar residues. Disordered stretches follow at residues 1–21 (MSSS…PIPD) and 33–119 (LKQA…TDDV). [2Fe-2S] cluster is bound by residues Cys42, Cys49, Cys52, and Cys54. The fe-S binding site A stretch occupies residues 42–54 (CTTRRRACKNCVC). Cys81, Cys84, Cys92, and Cys95 together coordinate [4Fe-4S] cluster. Short sequence motifs (cx2C motif) lie at residues 81–84 (CGNC) and 92–95 (CANC). Residues 81–95 (CGNCSKGDAFRCANC) form a fe-S binding site B region.

It belongs to the anamorsin family. As to quaternary structure, monomer. Requires [2Fe-2S] cluster as cofactor. The cofactor is [4Fe-4S] cluster.

The protein resides in the cytoplasm. Its subcellular location is the mitochondrion intermembrane space. Its function is as follows. Component of the cytosolic iron-sulfur (Fe-S) protein assembly (CIA) machinery. Required for the maturation of extramitochondrial Fe-S proteins. Part of an electron transfer chain functioning in an early step of cytosolic Fe-S biogenesis, facilitating the de novo assembly of a [4Fe-4S] cluster on the cytosolic Fe-S scaffold complex. Electrons are transferred from NADPH via a FAD- and FMN-containing diflavin oxidoreductase. Together with the diflavin oxidoreductase, also required for the assembly of the diferric tyrosyl radical cofactor of ribonucleotide reductase (RNR), probably by providing electrons for reduction during radical cofactor maturation in the catalytic small subunit. The chain is Anamorsin homolog from Leishmania infantum.